We begin with the raw amino-acid sequence, 717 residues long: Transport/processing ATP-binding protein ComA (717 aa).

Positions 11–138 (QVDQMDCGVA…EEWTGVTLFM (128 aa)) constitute a Peptidase C39 domain. Cysteine 17 is an active-site residue. 7 helical membrane passes run 18 to 38 (GVAS…LAHL), 166 to 186 (GLIA…IVGS), 205 to 225 (LGII…LSYA), 237 to 257 (LSID…MSFF), 281 to 301 (STIL…LVLF), 306 to 326 (NLFF…FAFM), and 397 to 417 (VAHL…VMDG). One can recognise an ABC transmembrane type-1 domain in the interval 168 to 450 (IANIVLATLL…IINLQTKLQT (283 aa)). An ABC transporter domain is found at 484–717 (MTFKQVHYKY…GGFYAHLVNS (234 aa)). Residue 517 to 524 (GISGSGKT) participates in ATP binding.

It belongs to the ABC transporter superfamily. HlyB family.

It localises to the cell membrane. In terms of biological role, required for induction of competence. Seems to transport the competence-stimulating peptide (CSP). The polypeptide is Transport/processing ATP-binding protein ComA (comA) (Streptococcus pneumoniae (strain ATCC BAA-255 / R6)).